An 87-amino-acid chain; its full sequence is Small ribosomal subunit protein uS17 (87 aa).

Belongs to the universal ribosomal protein uS17 family. In terms of assembly, part of the 30S ribosomal subunit.

Its function is as follows. One of the primary rRNA binding proteins, it binds specifically to the 5'-end of 16S ribosomal RNA. The sequence is that of Small ribosomal subunit protein uS17 from Bacillus cytotoxicus (strain DSM 22905 / CIP 110041 / 391-98 / NVH 391-98).